We begin with the raw amino-acid sequence, 171 residues long: uncharacterized protein (171 aa).

The protein belongs to the transferase hexapeptide repeat family.

This is an uncharacterized protein from Bacillus subtilis (strain 168).